A 256-amino-acid chain; its full sequence is 5'-nucleotidase SurE (256 aa).

Asp9, Asp10, Ser42, and Asn99 together coordinate a divalent metal cation.

It belongs to the SurE nucleotidase family. The cofactor is a divalent metal cation.

Its subcellular location is the cytoplasm. The enzyme catalyses a ribonucleoside 5'-phosphate + H2O = a ribonucleoside + phosphate. Functionally, nucleotidase that shows phosphatase activity on nucleoside 5'-monophosphates. The chain is 5'-nucleotidase SurE from Symbiobacterium thermophilum (strain DSM 24528 / JCM 14929 / IAM 14863 / T).